The following is a 215-amino-acid chain: Pyrrolidone-carboxylate peptidase (215 aa).

Catalysis depends on residues Glu80, Cys143, and His167.

The protein belongs to the peptidase C15 family. As to quaternary structure, homotetramer.

The protein resides in the cytoplasm. It catalyses the reaction Release of an N-terminal pyroglutamyl group from a polypeptide, the second amino acid generally not being Pro.. Its function is as follows. Removes 5-oxoproline from various penultimate amino acid residues except L-proline. This Yersinia pseudotuberculosis serotype O:1b (strain IP 31758) protein is Pyrrolidone-carboxylate peptidase.